The following is a 665-amino-acid chain: Auxin response factor 1 (665 aa).

The segment at residues Phe-124–Met-226 is a DNA-binding region (TF-B3). Disordered stretches follow at residues Val-356–Leu-408, Pro-496–Arg-542, and Lys-645–Arg-665. 3 stretches are compositionally biased toward polar residues: residues Val-497–Pro-519, Leu-530–Arg-542, and Asn-651–Arg-665. Residues Arg-542–Lys-635 enclose the PB1 domain.

Belongs to the ARF family. As to quaternary structure, homodimers and heterodimers. Interacts with the auxin-responsive proteins IAA12, IAA13, IAA17 and with ARF2. Binds to RIN13 in the nucleus. In terms of tissue distribution, expressed in the whole plant.

It is found in the nucleus. The protein localises to the cytoplasm. Auxin response factors (ARFs) are transcriptional factors that bind specifically to the DNA sequence 5'-TGTCTC-3' found in the auxin-responsive promoter elements (AuxREs). Seems to act as transcriptional repressor. Formation of heterodimers with Aux/IAA proteins may alter their ability to modulate early auxin response genes expression. Promotes flowering, stamen development, floral organ abscission and fruit dehiscence. Acts as a repressor of IAA2, IAA3 and IAA7. Together with RIN13, promotes leaf senescence and cell death. This chain is Auxin response factor 1, found in Arabidopsis thaliana (Mouse-ear cress).